The chain runs to 325 residues: Elongation factor P--(R)-beta-lysine ligase (325 aa).

76–78 (SPE) provides a ligand contact to substrate. ATP contacts are provided by residues 100 to 102 (RNE) and Asn109. Position 118 (Tyr118) interacts with substrate. 244–245 (EL) provides a ligand contact to ATP. Position 251 (Glu251) interacts with substrate. Gly300 provides a ligand contact to ATP.

The protein belongs to the class-II aminoacyl-tRNA synthetase family. EpmA subfamily. In terms of assembly, homodimer.

It carries out the reaction D-beta-lysine + L-lysyl-[protein] + ATP = N(6)-((3R)-3,6-diaminohexanoyl)-L-lysyl-[protein] + AMP + diphosphate + H(+). With EpmB is involved in the beta-lysylation step of the post-translational modification of translation elongation factor P (EF-P). Catalyzes the ATP-dependent activation of (R)-beta-lysine produced by EpmB, forming a lysyl-adenylate, from which the beta-lysyl moiety is then transferred to the epsilon-amino group of a conserved specific lysine residue in EF-P. The protein is Elongation factor P--(R)-beta-lysine ligase of Pectobacterium atrosepticum (strain SCRI 1043 / ATCC BAA-672) (Erwinia carotovora subsp. atroseptica).